The following is a 388-amino-acid chain: Processive diacylglycerol beta-glucosyltransferase (388 aa).

This sequence belongs to the glycosyltransferase 28 family. UgtP subfamily.

Its subcellular location is the cell membrane. It carries out the reaction a 1,2-diacyl-3-O-(beta-D-glucopyranosyl)-sn-glycerol + UDP-alpha-D-glucose = a 1,2-diacyl-3-O-(beta-D-Glc-(1-&gt;6)-beta-D-Glc)-sn-glycerol + UDP + H(+). The catalysed reaction is a 1,2-diacyl-3-O-(beta-D-Glc-(1-&gt;6)-beta-D-Glc)-sn-glycerol + UDP-alpha-D-glucose = a 1,2-diacyl-3-O-(beta-D-Glc-(1-&gt;6)-beta-D-Glc-(1-&gt;6)-beta-D-Glc)-sn-glycerol + UDP + H(+). It catalyses the reaction a 1,2-diacyl-sn-glycerol + UDP-alpha-D-glucose = a 1,2-diacyl-3-O-(beta-D-glucopyranosyl)-sn-glycerol + UDP + H(+). It functions in the pathway glycolipid metabolism; diglucosyl-diacylglycerol biosynthesis. Functionally, processive glucosyltransferase involved in the biosynthesis of both the bilayer- and non-bilayer-forming membrane glucolipids. Is able to successively transfer up to three glucosyl residues to diacylglycerol (DAG), thereby catalyzing the formation of beta-monoglucosyl-DAG (3-O-(beta-D-glucopyranosyl)-1,2-diacyl-sn-glycerol), beta-diglucosyl-DAG (3-O-(beta-D-glucopyranosyl-beta-(1-&gt;6)-D-glucopyranosyl)-1,2-diacyl-sn-glycerol) and beta-triglucosyl-DAG (3-O-(beta-D-glucopyranosyl-beta-(1-&gt;6)-D-glucopyranosyl-beta-(1-&gt;6)-D-glucopyranosyl)-1,2-diacyl-sn-glycerol). Beta-diglucosyl-DAG is the predominant glycolipid found in Bacillales and is also used as a membrane anchor for lipoteichoic acid (LTA). The chain is Processive diacylglycerol beta-glucosyltransferase from Bacillus anthracis (strain A0248).